A 74-amino-acid polypeptide reads, in one-letter code: uncharacterized protein (74 aa).

A helical transmembrane segment spans residues 52-72; that stretch reads ITFGFTVLGLGIGMIFGDAGL.

The protein resides in the membrane. This is an uncharacterized protein from Methanocaldococcus jannaschii (strain ATCC 43067 / DSM 2661 / JAL-1 / JCM 10045 / NBRC 100440) (Methanococcus jannaschii).